Reading from the N-terminus, the 215-residue chain is 3-demethoxyubiquinol 3-hydroxylase (215 aa).

6 residues coordinate Fe cation: Glu64, Glu94, His97, Glu146, Glu178, and His181.

The protein belongs to the COQ7 family. Requires Fe cation as cofactor.

The protein localises to the cell membrane. It carries out the reaction a 5-methoxy-2-methyl-3-(all-trans-polyprenyl)benzene-1,4-diol + AH2 + O2 = a 3-demethylubiquinol + A + H2O. It participates in cofactor biosynthesis; ubiquinone biosynthesis. Catalyzes the hydroxylation of 2-nonaprenyl-3-methyl-6-methoxy-1,4-benzoquinol during ubiquinone biosynthesis. The chain is 3-demethoxyubiquinol 3-hydroxylase from Pseudomonas fluorescens (strain ATCC BAA-477 / NRRL B-23932 / Pf-5).